A 257-amino-acid polypeptide reads, in one-letter code: NAD-capped RNA hydrolase NudC (257 aa).

Residues Lys-25 and Arg-69 each coordinate substrate. 2 residues coordinate Zn(2+): Cys-98 and Cys-101. Glu-111 contacts substrate. Residues Cys-116 and Cys-119 each coordinate Zn(2+). Tyr-124 lines the substrate pocket. The Nudix hydrolase domain maps to 125–248; the sequence is PQIAPCIIVA…TVARRLIEDT (124 aa). A divalent metal cation is bound by residues Ala-158, Glu-174, and Glu-178. The Nudix box motif lies at 159-180; the sequence is GFVEVGETLEQAVAREVMEESG. 192 to 199 provides a ligand contact to substrate; the sequence is QPWPFPQS. Position 219 (Glu-219) interacts with a divalent metal cation. A substrate-binding site is contributed by Ala-241.

The protein belongs to the Nudix hydrolase family. NudC subfamily. As to quaternary structure, homodimer. Mg(2+) serves as cofactor. Requires Mn(2+) as cofactor. It depends on Zn(2+) as a cofactor.

It carries out the reaction a 5'-end NAD(+)-phospho-ribonucleoside in mRNA + H2O = a 5'-end phospho-adenosine-phospho-ribonucleoside in mRNA + beta-nicotinamide D-ribonucleotide + 2 H(+). The catalysed reaction is NAD(+) + H2O = beta-nicotinamide D-ribonucleotide + AMP + 2 H(+). The enzyme catalyses NADH + H2O = reduced beta-nicotinamide D-ribonucleotide + AMP + 2 H(+). MRNA decapping enzyme that specifically removes the nicotinamide adenine dinucleotide (NAD) cap from a subset of mRNAs by hydrolyzing the diphosphate linkage to produce nicotinamide mononucleotide (NMN) and 5' monophosphate mRNA. The NAD-cap is present at the 5'-end of some mRNAs and stabilizes RNA against 5'-processing. Has preference for mRNAs with a 5'-end purine. Catalyzes the hydrolysis of a broad range of dinucleotide pyrophosphates. In Escherichia coli O7:K1 (strain IAI39 / ExPEC), this protein is NAD-capped RNA hydrolase NudC.